Here is a 503-residue protein sequence, read N- to C-terminus: Ribose import ATP-binding protein RbsA (503 aa).

ABC transporter domains lie at 10–246 (LEVR…VGRD) and 256–500 (VEPG…TGSE). 42–49 (GENGAGKS) provides a ligand contact to ATP.

This sequence belongs to the ABC transporter superfamily. Ribose importer (TC 3.A.1.2.1) family. As to quaternary structure, the complex is composed of an ATP-binding protein (RbsA), two transmembrane proteins (RbsC) and a solute-binding protein (RbsB).

The protein localises to the cell membrane. The catalysed reaction is D-ribose(out) + ATP + H2O = D-ribose(in) + ADP + phosphate + H(+). In terms of biological role, part of the ABC transporter complex RbsABC involved in ribose import. Responsible for energy coupling to the transport system. The polypeptide is Ribose import ATP-binding protein RbsA (Rhodococcus jostii (strain RHA1)).